A 372-amino-acid polypeptide reads, in one-letter code: Protein-glutamate methylesterase/protein-glutamine glutaminase 1 (372 aa).

The Response regulatory domain maps to K4–L121. Residue D55 is modified to 4-aspartylphosphate. The disordered stretch occupies residues V138–A174. Residues S179 to G372 form the CheB-type methylesterase domain. Catalysis depends on residues S191, H218, and D314.

Belongs to the CheB family. Post-translationally, phosphorylated by CheA. Phosphorylation of the N-terminal regulatory domain activates the methylesterase activity.

The protein resides in the cytoplasm. It carries out the reaction [protein]-L-glutamate 5-O-methyl ester + H2O = L-glutamyl-[protein] + methanol + H(+). The enzyme catalyses L-glutaminyl-[protein] + H2O = L-glutamyl-[protein] + NH4(+). Involved in chemotaxis. Part of a chemotaxis signal transduction system that modulates chemotaxis in response to various stimuli. Catalyzes the demethylation of specific methylglutamate residues introduced into the chemoreceptors (methyl-accepting chemotaxis proteins or MCP) by CheR. Also mediates the irreversible deamidation of specific glutamine residues to glutamic acid. The sequence is that of Protein-glutamate methylesterase/protein-glutamine glutaminase 1 from Shewanella sp. (strain MR-4).